Consider the following 732-residue polypeptide: Putative pectinesterase/pectinesterase inhibitor 28 (732 aa).

The helical transmembrane segment at 17–37 (VIISISSVLLISMVVAVTIGV) threads the bilayer. Residues N40, N93, N278, and N297 are each glycosylated (N-linked (GlcNAc...) asparagine). The pectinesterase inhibitor 28 stretch occupies residues 51-204 (TTSVKAIKDV…VQLTHNGLAM (154 aa)). Positions 252 to 548 (DIVVAQDGSG…FTPAQYIQGD (297 aa)) are pectinesterase 28. Residues T327 and Q357 each coordinate substrate. D380 (proton donor; for pectinesterase activity) is an active-site residue. The cysteines at positions 394 and 414 are disulfide-linked. D401 acts as the Nucleophile; for pectinesterase activity in catalysis. Residue N413 is glycosylated (N-linked (GlcNAc...) asparagine). Positions 469 and 471 each coordinate substrate. N-linked (GlcNAc...) asparagine glycans are attached at residues N566, N570, and N581. 2 stretches are compositionally biased toward low complexity: residues 570 to 620 (NSTV…PSTS) and 633 to 732 (PSMV…SSIG). A disordered region spans residues 570–732 (NSTVTGSSLS…PSASPQSSIG (163 aa)).

The protein in the N-terminal section; belongs to the PMEI family. It in the C-terminal section; belongs to the pectinesterase family. In terms of tissue distribution, expressed in flower buds.

It is found in the membrane. It catalyses the reaction [(1-&gt;4)-alpha-D-galacturonosyl methyl ester](n) + n H2O = [(1-&gt;4)-alpha-D-galacturonosyl](n) + n methanol + n H(+). The protein operates within glycan metabolism; pectin degradation; 2-dehydro-3-deoxy-D-gluconate from pectin: step 1/5. In terms of biological role, acts in the modification of cell walls via demethylesterification of cell wall pectin. This chain is Putative pectinesterase/pectinesterase inhibitor 28 (PME28), found in Arabidopsis thaliana (Mouse-ear cress).